Consider the following 907-residue polypeptide: MPLRLEIKRKFAQRSERVKSVDLHPTEPWILSSLYSGSVCIWDYQSQTMVKSFEVSELPVRSAKFISRKQWVVAGADDMFIRVYNYNTMDKVKVFEAHTDYIRCVAVHPTLPYVLSSSDDMLIKLWDWDKGWMCTQIFEGHSHYVMQVTFNPKDTNTFASASLDRTTKIWSLGSPDPNFTLDGHQKGVNCVDYFTGGDRPYLITGSDDSTAKVWDYQTKSCVQTLEGHTHNISAVCFHPELPIIITGSEDGTVRIWHSTTYRLENTLNYGLERVWAVGYMKGSRRMVIGYDEGTIMIKMGREVPVASMDTSGKIIWAKHNEIQTVNIKTVGAGFEVTDGERLPLAVKELGSCDLYPQSLKHNPNGRFVVVCGDGEFIIYTALAWRNRSFGSALEFVWSSEGEYAIRESTSRIKIFSKSFQEKKTIRPTFSAERIFGGILLAMCSSDFICFYDWADCRLIRRIDVNVKNLYWADSGDLVAIASDTSFYILKYNRDVVASYLESGKPVDEEGVEDAFELLHEVNERVRTGIWVGDCFIYNNSSWRLNYCVGGEVTTMYHLDRPMYLLGYLANQSRVYLIDKEFNVMGYTLLLSLIEYKTLVMRGDIERANDILPSIPKAQYNNVAHFLESRGMLEEALEIATDADYRFDLAVQLGKLEVAKAIAMEAQSESKWKQLGELAMSTGKLDMAEECLVQAKDLSGLLLLYSSLGDAEGIEKLASQAKEHGKNNVAFLCLFMLGKLEDCIQLLIDSNRIPEAALMARSYLPSKVSEIVAIWRNDLSKVNPKAAESLADPSEYPNLFEDWQVALTVEKNVASRRVHYPPADEYLNHAEKSDMTLVEAFKRMQVIEDEETEDALDENGEPDEEVLEENKVEESTDEAVEVDADEPEETVLVNGKEGEEQWVLTEHE.

WD repeat units follow at residues 13-52, 55-94, 97-136, 140-180, 183-224, 227-266, 269-309, 351-389, and 461-501; these read QRSE…MVKS, VSEL…KVKV, AHTD…MCTQ, GHSH…PNFT, GHQK…CVQT, GHTH…LENT, YGLE…ASMD, SCDL…NRSF, and RIDV…SYLE. Acidic residues-rich tracts occupy residues 850–866 and 874–887; these read ETED…EEVL and STDE…DEPE. The interval 850-887 is disordered; it reads ETEDALDENGEPDEEVLEENKVEESTDEAVEVDADEPE.

The protein belongs to the WD repeat COPB2 family. As to quaternary structure, oligomeric complex that consists of at least the alpha, beta, beta', gamma, delta, epsilon and zeta subunits.

The protein localises to the cytoplasm. It localises to the golgi apparatus membrane. The protein resides in the cytoplasmic vesicle. Its subcellular location is the COPI-coated vesicle membrane. In terms of biological role, the coatomer is a cytosolic protein complex that binds to dilysine motifs and reversibly associates with Golgi non-clathrin-coated vesicles, which further mediate biosynthetic protein transport from the ER, via the Golgi up to the trans Golgi network. Coatomer complex is required for budding from Golgi membranes, and is essential for the retrograde Golgi-to-ER transport of dilysine-tagged proteins. The protein is Coatomer subunit beta'-1 of Oryza sativa subsp. japonica (Rice).